The sequence spans 100 residues: Small cysteine and glycine repeat-containing protein 3 (100 aa).

A 13 X 2 AA repeats of CG region spans residues 4 to 82; that stretch reads CGCGSCGGCG…RRTCRSCGCG (79 aa).

It belongs to the KRTAP type 28 family.

Functionally, in the hair cortex, hair keratin intermediate filaments are embedded in an interfilamentous matrix, consisting of hair keratin-associated proteins (KRTAP), which are essential for the formation of a rigid and resistant hair shaft through their extensive disulfide bond cross-linking with abundant cysteine residues of hair keratins. The matrix proteins include the high-sulfur and high-glycine-tyrosine keratins. The chain is Small cysteine and glycine repeat-containing protein 3 from Homo sapiens (Human).